The chain runs to 378 residues: MTDSPVLALAKDLISRQSVTPEDAGCQDLMIERLKALGFEIEVMVFEDTTNFWARRGNEAPLFAFAGHTDVVPAGKLEQWDTPPFEPTIIDGYLHGRGAADMKGSLAAMVVAVERFIAEHPDHKGSIGFLITSDEEGPFINGTVRVVEALMERGENIDMCIVGEPSSTEIVGDVVKNGRRGSITGDLTVKGTQGHVAYPHLANNPVHASLLAIHELATTEWDKGNDYFPPTSFQIPNVSAGTGASNVIPGEFNVQFNLRFSTELNNDTIVQRVTETLDKHDLNYDLHWTFNGDPFLTDTGALLDAVVAAVAEVNNTKPALLTTGGTSDGRFIARMGGQVVELGPVNATIHKVNECVKVDDLEKLTDMYENTLKHLLAK.

Residue H68 participates in Zn(2+) binding. Residue D70 is part of the active site. D101 contacts Zn(2+). Catalysis depends on E135, which acts as the Proton acceptor. Residues E136, E164, and H350 each contribute to the Zn(2+) site.

Belongs to the peptidase M20A family. DapE subfamily. In terms of assembly, homodimer. It depends on Zn(2+) as a cofactor. Requires Co(2+) as cofactor.

The catalysed reaction is N-succinyl-(2S,6S)-2,6-diaminopimelate + H2O = (2S,6S)-2,6-diaminopimelate + succinate. It participates in amino-acid biosynthesis; L-lysine biosynthesis via DAP pathway; LL-2,6-diaminopimelate from (S)-tetrahydrodipicolinate (succinylase route): step 3/3. In terms of biological role, catalyzes the hydrolysis of N-succinyl-L,L-diaminopimelic acid (SDAP), forming succinate and LL-2,6-diaminopimelate (DAP), an intermediate involved in the bacterial biosynthesis of lysine and meso-diaminopimelic acid, an essential component of bacterial cell walls. This Vibrio parahaemolyticus serotype O3:K6 (strain RIMD 2210633) protein is Succinyl-diaminopimelate desuccinylase.